Here is a 412-residue protein sequence, read N- to C-terminus: Putative competence-damage inducible protein (412 aa).

This sequence belongs to the CinA family.

The polypeptide is Putative competence-damage inducible protein (Clostridium perfringens (strain 13 / Type A)).